We begin with the raw amino-acid sequence, 193 residues long: Flagellar transcriptional regulator FlhC (193 aa).

C137, C140, C158, and C161 together coordinate Zn(2+).

This sequence belongs to the FlhC family. As to quaternary structure, heterohexamer composed of two FlhC and four FlhD subunits. Each FlhC binds a FlhD dimer, forming a heterotrimer, and a hexamer assembles by dimerization of two heterotrimers. Zn(2+) is required as a cofactor.

The protein localises to the cytoplasm. Functions in complex with FlhD as a master transcriptional regulator that regulates transcription of several flagellar and non-flagellar operons by binding to their promoter region. Activates expression of class 2 flagellar genes, including fliA, which is a flagellum-specific sigma factor that turns on the class 3 genes. Also regulates genes whose products function in a variety of physiological pathways. This Pectobacterium carotovorum (Erwinia carotovora) protein is Flagellar transcriptional regulator FlhC.